A 398-amino-acid chain; its full sequence is Signal-regulatory protein beta-1 (398 aa).

An N-terminal signal peptide occupies residues 1–29; that stretch reads MPVPASWPHLPSPFLLMTLLLGRLTGVAG. An Ig-like V-type domain is found at 30 to 136; the sequence is EDELQVIQPE…SPDDVEFKSG (107 aa). The Extracellular portion of the chain corresponds to 30-371; the sequence is EDELQVIQPE…EAALAPTAPL (342 aa). Intrachain disulfides connect C54–C120 and C169–C227. 2 Ig-like C1-type domains span residues 147-246 and 253-347; these read PSAP…ANLS and PTLE…YALE. N-linked (GlcNAc...) asparagine glycans are attached at residues N244, N269, and N291. A helical transmembrane segment spans residues 372–392; that stretch reads LVALLLGPKLLLVVGVSAIYI. At 393–398 the chain is on the cytoplasmic side; it reads CWKQKA.

As to quaternary structure, homodimer; disulfide-linked. Interacts with TYROBP. This interaction results in the recruitment of SYK. Post-translationally, N-glycosylated. Detected in monocytes and dendritic cells.

The protein resides in the cell membrane. Functionally, immunoglobulin-like cell surface receptor involved in the negative regulation of receptor tyrosine kinase-coupled signaling processes. Also participates in the recruitment of tyrosine kinase SYK. Triggers activation of myeloid cells when associated with TYROBP. The sequence is that of Signal-regulatory protein beta-1 (SIRPB1) from Homo sapiens (Human).